The primary structure comprises 556 residues: Small ribosomal subunit protein bS1 (556 aa).

S1 motif domains lie at 35–105 (TIKE…ISQQ), 120–183 (NAII…ISRK), 204–272 (TEPV…LSIK), 289–359 (GYAI…VSLK), 377–444 (DVLE…LSAK), and 461–525 (DSVI…ASVH).

This sequence belongs to the bacterial ribosomal protein bS1 family.

Binds mRNA; thus facilitating recognition of the initiation point. It is needed to translate mRNA with a short Shine-Dalgarno (SD) purine-rich sequence. The polypeptide is Small ribosomal subunit protein bS1 (rpsA) (Helicobacter pylori (strain ATCC 700392 / 26695) (Campylobacter pylori)).